The primary structure comprises 641 residues: MPILEKVPPKMPVQASSCEEVLDLPKLPVPPLQQTLATYLQCMQHLVPEEQFRKSQAIVKRFGAPGGLGETLQEKLLERQEKTANWVSEYWLNDMYLNNRLALPVNSSPAVIFARQHFQDTNDQLRFAASLISGVLSYKALLDSQSIPTDWAKGQLSGQPLCMKQYYRLFSSYRLPGHTQDTLVAQKSSIMPEPEHVIVACCNQFFVLDVVINFRRLSEGDLFTQLRKIVKMASNEDERLPPIGLLTSDGRSEWAKARTVLLKDSTNRDSLDMIERCICLVCLDGPGTGDLSDTHRALQLLHGGGCSLNGANRWYDKSLQFVVGRDGTCGVVCEHSPFDGIVLVQCTEHLLKHMMTGNKKLVRVDSVSELPAPRRLRWKCSPETQGHLASSAEKLQRIVKNLDFIVYKFDNYGKTFIKKQKCSPDGFIQVALQLAYYRLYQRLVPTYESASIRRFQEGRVDNIRSATPEALAFVQAMTDHKAAVLASEKLQLLQRAIQAQTEYTVMAITGMAIDNHLLALRELARDLCKEPPEMFMDETYLMSNRFILSTSQVPTTMEMFCCYGPVVPNGYGACYNPHAEAITFCISSFHGCKETSSVEFAEAVGASLVDMRDLCSSRQPADSKPPTAKERARGPSQAKQS.

At Ser17 the chain carries Phosphoserine. The active-site Proton acceptor is the His335. Residue Ser366 is modified to Phosphoserine. Residues 413 to 425 (GKTF…CSPD), Ser451, and Gln552 contribute to the CoA site. The interval 615-641 (CSSRQPADSKPPTAKERARGPSQAKQS) is disordered.

The protein belongs to the carnitine/choline acetyltransferase family.

The catalysed reaction is choline + acetyl-CoA = acetylcholine + CoA. In terms of biological role, catalyzes the reversible synthesis of acetylcholine (ACh) from acetyl CoA and choline at cholinergic synapses. This chain is Choline O-acetyltransferase (Chat), found in Mus musculus (Mouse).